A 338-amino-acid chain; its full sequence is Heat-inducible transcription repressor HrcA (338 aa).

The protein belongs to the HrcA family.

Negative regulator of class I heat shock genes (grpE-dnaK-dnaJ and groELS operons). Prevents heat-shock induction of these operons. The chain is Heat-inducible transcription repressor HrcA from Bacillus cereus (strain ATCC 10987 / NRS 248).